A 529-amino-acid polypeptide reads, in one-letter code: Putative cysteine ligase BshC (529 aa).

Residues 450–485 adopt a coiled-coil conformation; that stretch reads VKQTKGLENLEKRLLKAQKRNLSDQLQRVIDLQCEL.

This sequence belongs to the BshC family.

The sequence is that of Putative cysteine ligase BshC from Flavobacterium johnsoniae (strain ATCC 17061 / DSM 2064 / JCM 8514 / BCRC 14874 / CCUG 350202 / NBRC 14942 / NCIMB 11054 / UW101) (Cytophaga johnsonae).